The sequence spans 704 residues: ATP-dependent zinc metalloprotease FTSH 5, chloroplastic (704 aa).

A chloroplast-targeting transit peptide spans 1 to 58 (MATTSSNPLLLSSNFLGSQIIISAPTPKTTTKSLPFSVISRKRYQISQSEKLMKSLPS). The N-terminal 18 residues, 59 to 76 (QAALAALLFSSSSPQALA), are a transit peptide targeting the thylakoid. A helical transmembrane segment spans residues 193 to 213 (FDFIGNLLFPLLAFGGLFYLF). ATP is bound at residue 290 to 297 (GPPGTGKT). His-512 provides a ligand contact to Zn(2+). Residue Glu-513 is part of the active site. The Zn(2+) site is built by His-516 and Asp-593.

It in the N-terminal section; belongs to the AAA ATPase family. This sequence in the C-terminal section; belongs to the peptidase M41 family. As to quaternary structure, heterohexamers with FTSH1, FTSH2 and FTSH8. Zn(2+) is required as a cofactor. As to expression, ubiquitous.

The protein resides in the plastid. It localises to the chloroplast thylakoid membrane. Its function is as follows. Part of a complex that function as an ATP-dependent zinc metallopeptidase. Involved in the thylakoid formation and in the removal of damaged D1 in the photosystem II, preventing cell death under high-intensity light conditions. Not involved in the degradation of the light-harvesting complex of photosystem II (LHC II) or in thermotolerance. The protein is ATP-dependent zinc metalloprotease FTSH 5, chloroplastic (FTSH5) of Arabidopsis thaliana (Mouse-ear cress).